We begin with the raw amino-acid sequence, 220 residues long: Putative cobalt transport protein CbiM (220 aa).

5 consecutive transmembrane segments (helical) span residues 6-26 (GFLPPRWAAAWTLAAAPIVVY), 43-63 (ALVAIGIAFVFILSALKFPSV), 74-94 (GLLVVLFGPAVTAFTATIVLL), 98-118 (LLLAHGGITTLGANVVAMGII), and 182-202 (IFTLTQVPIGILEGILAAAVI).

This sequence belongs to the CbiM family. In terms of assembly, forms an energy-coupling factor (ECF) transporter complex composed of an ATP-binding protein (A component, CbiO), a transmembrane protein (T component, CbiQ) and 2 possible substrate-capture proteins (S components, CbiM and CbiN) of unknown stoichimetry.

The protein resides in the cell membrane. It functions in the pathway cofactor biosynthesis; adenosylcobalamin biosynthesis. Functionally, part of the energy-coupling factor (ECF) transporter complex CbiMNOQ involved in cobalt import. The chain is Putative cobalt transport protein CbiM from Haloquadratum walsbyi (strain DSM 16790 / HBSQ001).